The sequence spans 600 residues: Melanophilin (600 aa).

Positions 4-124 constitute a RabBD domain; that stretch reads KLDLSKLTDE…IGSLEWYYEH (121 aa). The FYVE-type zinc finger occupies 64–107; that stretch reads CARCLQPYQLLVNSKRQCLECGLFTCKSCGRVHPEEQGWICDPC. 4 disordered regions span residues 146–277, 390–465, 499–541, and 553–600; these read QGGA…AELC, EELT…LSEL, TVKP…AKAM, and NSLK…AHQS. Composition is skewed to basic and acidic residues over residues 232–243 and 409–420; these read CSEKAAPHKAEG and KDEKAEPNRDKS. Residues 373–496 adopt a coiled-coil conformation; the sequence is GVRTEADVEE…ESRIAALRAA (124 aa). Residues 558–569 show a composition bias toward basic and acidic residues; it reads QGKDDDSFDRKS.

As to quaternary structure, binds RAB27A that has been activated by GTP-binding via its N-terminus. Binds MYO5A via its C-terminal coiled coil domain.

The protein localises to the cytoplasm. Functionally, rab effector protein involved in melanosome transport. Serves as link between melanosome-bound RAB27A and the motor protein MYO5A. The sequence is that of Melanophilin (MLPH) from Homo sapiens (Human).